The primary structure comprises 387 residues: Succinyl-diaminopimelate desuccinylase (387 aa).

A Zn(2+)-binding site is contributed by His74. Asp76 is a catalytic residue. Residue Asp107 participates in Zn(2+) binding. Glu142 acts as the Proton acceptor in catalysis. Positions 143, 171, and 360 each coordinate Zn(2+).

The protein belongs to the peptidase M20A family. DapE subfamily. As to quaternary structure, homodimer. Zn(2+) is required as a cofactor. It depends on Co(2+) as a cofactor.

It carries out the reaction N-succinyl-(2S,6S)-2,6-diaminopimelate + H2O = (2S,6S)-2,6-diaminopimelate + succinate. It participates in amino-acid biosynthesis; L-lysine biosynthesis via DAP pathway; LL-2,6-diaminopimelate from (S)-tetrahydrodipicolinate (succinylase route): step 3/3. Its function is as follows. Catalyzes the hydrolysis of N-succinyl-L,L-diaminopimelic acid (SDAP), forming succinate and LL-2,6-diaminopimelate (DAP), an intermediate involved in the bacterial biosynthesis of lysine and meso-diaminopimelic acid, an essential component of bacterial cell walls. In Rhodopseudomonas palustris (strain TIE-1), this protein is Succinyl-diaminopimelate desuccinylase.